The following is a 223-amino-acid chain: B-cell antigen receptor complex-associated protein alpha chain (223 aa).

The first 31 residues, 1 to 31 (MPEGPQALQSPPATIFLLLISAAGLGPGCQA), serve as a signal peptide directing secretion. The region spanning 32–120 (LWVEWGPPSV…KIQRSCGTYL (89 aa)) is the Ig-like C2-type domain. The Extracellular portion of the chain corresponds to 32 to 140 (LWVEWGPPSV…LDMGEGTKNN (109 aa)). Cysteines 53 and 104 form a disulfide. N-linked (GlcNAc...) asparagine glycans are attached at residues Asn-56, Asn-61, Asn-71, and Asn-95. Residues 141-161 (IITAEGIILLICAVVPGTLLL) form a helical membrane-spanning segment. At 162 to 223 (FRKRWQNMKF…HIGDAQLEKP (62 aa)) the chain is on the cytoplasmic side. Positions 174–202 (DIQDDYEDENLYEGLNLDDCSMYEDISRG) constitute an ITAM domain. Residue Tyr-185 is modified to Phosphotyrosine; by SRC-type Tyr-kinases. At Tyr-196 the chain carries Phosphotyrosine. Arg-201 is modified (asymmetric dimethylarginine; by PRMT1). The residue at position 207 (Tyr-207) is a Phosphotyrosine; by Tyr-kinases.

Heterodimer of alpha and beta chains; disulfide-linked. Part of the B-cell antigen receptor complex where the alpha/beta chain heterodimer is non-covalently associated with an antigen-specific membrane-bound surface immunoglobulin of two heavy chains and two light chains. Interacts through its phosphorylated ITAM domain with the SH2 domains of SYK which stimulates SYK autophosphorylation and activation. Also interacts, when phosphorylated on Tyr-207, with the SH2 domain of BLNK/SLP65, bringing BLNK into proximity with SYK and allowing SYK to phosphorylate BLNK which is necessary for trafficking of the BCR to late endosomes. Interacts with Src-family tyrosine kinases including FYN and LYN, increasing their activity. Post-translationally, phosphorylated on tyrosine, serine and threonine residues upon B-cell activation. Phosphorylation of tyrosine residues by Src-family kinases, including LYN, is an early and essential feature of the BCR signaling cascade. The phosphorylated tyrosines serve as docking sites for SH2-domain containing kinases, leading to their activation which in turn leads to phosphorylation of downstream targets. Phosphorylation of serine and threonine residues may prevent subsequent tyrosine phosphorylation. In terms of processing, arginine methylation in the ITAM domain may interfere with the binding of SYK. It promotes signals leading to B-cell differentiation. In terms of tissue distribution, B-cells.

It localises to the cell membrane. In terms of biological role, required in cooperation with CD79B for initiation of the signal transduction cascade activated by binding of antigen to the B-cell antigen receptor complex (BCR) which leads to internalization of the complex, trafficking to late endosomes and antigen presentation. Also required for BCR surface expression and for efficient differentiation of pro- and pre-B-cells. Stimulates SYK autophosphorylation and activation. Binds to BLNK, bringing BLNK into proximity with SYK and allowing SYK to phosphorylate BLNK. Also interacts with and increases activity of some Src-family tyrosine kinases. Represses BCR signaling during development of immature B-cells. In Bos taurus (Bovine), this protein is B-cell antigen receptor complex-associated protein alpha chain (CD79A).